A 205-amino-acid chain; its full sequence is Allergen Asp f 15 homolog (205 aa).

The protein belongs to the cerato-platanin family.

It is found in the secreted. This Arthroderma benhamiae (strain ATCC MYA-4681 / CBS 112371) (Trichophyton mentagrophytes) protein is Allergen Asp f 15 homolog.